The sequence spans 212 residues: Ribosomal RNA small subunit methyltransferase G (212 aa).

S-adenosyl-L-methionine contacts are provided by residues glycine 80, leucine 85, 131–132 (AE), and arginine 146.

Belongs to the methyltransferase superfamily. RNA methyltransferase RsmG family.

Its subcellular location is the cytoplasm. It catalyses the reaction guanosine(527) in 16S rRNA + S-adenosyl-L-methionine = N(7)-methylguanosine(527) in 16S rRNA + S-adenosyl-L-homocysteine. Functionally, specifically methylates the N7 position of guanine in position 527 of 16S rRNA. The protein is Ribosomal RNA small subunit methyltransferase G of Xanthomonas campestris pv. campestris (strain B100).